The chain runs to 345 residues: UDP-3-O-acylglucosamine N-acyltransferase (345 aa).

Histidine 252 functions as the Proton acceptor in the catalytic mechanism.

This sequence belongs to the transferase hexapeptide repeat family. LpxD subfamily. As to quaternary structure, homotrimer.

It carries out the reaction a UDP-3-O-[(3R)-3-hydroxyacyl]-alpha-D-glucosamine + a (3R)-hydroxyacyl-[ACP] = a UDP-2-N,3-O-bis[(3R)-3-hydroxyacyl]-alpha-D-glucosamine + holo-[ACP] + H(+). It functions in the pathway bacterial outer membrane biogenesis; LPS lipid A biosynthesis. Functionally, catalyzes the N-acylation of UDP-3-O-acylglucosamine using 3-hydroxyacyl-ACP as the acyl donor. Is involved in the biosynthesis of lipid A, a phosphorylated glycolipid that anchors the lipopolysaccharide to the outer membrane of the cell. This chain is UDP-3-O-acylglucosamine N-acyltransferase, found in Rickettsia rickettsii.